Consider the following 937-residue polypeptide: Coiled-coil domain-containing protein 39 (937 aa).

4 coiled-coil regions span residues 16 to 137 (AIPV…CQMN), 165 to 339 (QQDD…KKDI), 365 to 615 (EKTL…SQIR), and 664 to 816 (VIKA…LKQT). Residues 866–937 (LPTARGPSSR…NIPKEKKLSK (72 aa)) form a disordered region. A compositionally biased stretch (low complexity) spans 873-887 (SSRSSSQSSSLSSFR). Residues Ser888 and Ser896 each carry the phosphoserine modification. The span at 915-928 (NDSSRSASSGSNSN) shows a compositional bias: low complexity.

It belongs to the CCDC39 family. Strongly expressed in tissues rich in ciliated cells. Expressed in olfactory and vomeronasal sensory neurons and the respiratory epithelium. Expressed in node cells carrying motile cilia, in upper and lower airways, and in ependymal and choroid plexus cells.

It localises to the cytoplasm. It is found in the cytoskeleton. The protein localises to the cilium axoneme. Functionally, required for assembly of dynein regulatory complex (DRC) and inner dynein arm (IDA) complexes, which are responsible for ciliary beat regulation, thereby playing a central role in motility in cilia and flagella. Probably acts together with CCDC40 to form a molecular ruler that determines the 96 nanometer (nm) repeat length and arrangements of components in cilia and flagella. Not required for outer dynein arm complexes assembly. This chain is Coiled-coil domain-containing protein 39, found in Mus musculus (Mouse).